A 138-amino-acid polypeptide reads, in one-letter code: Superoxide dismutase [Mn] (138 aa).

Mn(2+) is bound by residues His1, His49, Asp133, and His137.

Belongs to the iron/manganese superoxide dismutase family. Mn(2+) serves as cofactor.

The enzyme catalyses 2 superoxide + 2 H(+) = H2O2 + O2. Destroys superoxide anion radicals which are normally produced within the cells and which are toxic to biological systems. This Mycobacterium malmoense protein is Superoxide dismutase [Mn] (sodA).